We begin with the raw amino-acid sequence, 1021 residues long: Receptor-like protein EIX2 (1021 aa).

Positions 1-24 (MGKRTNPRHFLVTWSLLLLETAFG) are cleaved as a signal peptide. The interval 25–109 (LTSREVNKTL…PILTGKVSPS (85 aa)) is N-cap. Residues 25 to 963 (LTSREVNKTL…DDDDEFSSLE (939 aa)) lie on the Extracellular side of the membrane. N-linked (GlcNAc...) asparagine glycosylation is present at N31. 6 LRR repeats span residues 113–136 (LEYL…RFIG), 138–161 (LKRL…QFQN), 162–184 (LTSL…VWLS), 186–211 (LSSL…ITKV), 214–237 (LKEL…VANS), and 239–262 (LISL…SWLF). N-linked (GlcNAc...) asparagine glycosylation is found at N145 and N161. Residue N236 is glycosylated (N-linked (GlcNAc...) asparagine). Residue N263 is glycosylated (N-linked (GlcNAc...) asparagine). LRR repeat units lie at residues 265–288 (STSL…RFGS), 290–313 (MYLE…SFGN), 314–337 (LTRL…LFLR), 342–365 (RKSL…VTRF), 366–388 (SSLK…RVGQ), 389–412 (VSSL…LALF), 413–436 (PSLR…IGKL), 437–459 (SQLR…MGQL), 461–483 (NLER…HFSN), 484–507 (LSSL…DWVP), 509–532 (FQLQ…LQTQ), 533–555 (NNYT…WFSN), 557–581 (PPEL…IVSK), and 583–607 (DYMI…NIQI). N-linked (GlcNAc...) asparagine glycosylation is present at N313. N483 is a glycosylation site (N-linked (GlcNAc...) asparagine). N534, N544, N564, and N593 each carry an N-linked (GlcNAc...) asparagine glycan. The stretch at 608 to 626 (FYLHKNHFSGSISSICRNT) is one LRR 21; degenerate repeat. LRR repeat units follow at residues 627–651 (IGAA…WMNM), 652–675 (SNLA…LGSL), 677–698 (NLEA…FSQC), 699–722 (QLLQ…IGTD), 723–747 (LLQL…ICQL), and 749–773 (FLQI…NFTI). 2 N-linked (GlcNAc...) asparagine glycosylation sites follow: N650 and N663. N-linked (GlcNAc...) asparagine glycans are attached at residues N770 and N778. LRR repeat units follow at residues 818–842 (LLYL…IAEM), 843–866 (RGLR…IGQM), 867–890 (KLLE…LSNL), and 892–913 (FLSV…STQL). Residues N849, N856, and N889 are each glycosylated (N-linked (GlcNAc...) asparagine). The segment at 914–963 (QSFDRSSYSGNAQLCGPPLEECPGYAPPIDRGSNTNPQEHDDDDEFSSLE) is C-cap/acidic domain. The chain crosses the membrane as a helical span at residues 964–984 (FYVSMVLGFFVTFWGILGCLI). Topologically, residues 985–1021 (VNRSWRNAYFTFLTDMKSWLHMTSRVCFARLKGKLRN) are cytoplasmic.

Belongs to the RLP family. Interacts with EIX elicitor protein.

The protein localises to the cell membrane. Its function is as follows. Involved in plant defense. Confers resistance to the fungal pathogen T.viride through recognition of the EIX elicitor protein. This chain is Receptor-like protein EIX2, found in Solanum lycopersicum (Tomato).